Consider the following 216-residue polypeptide: Acyl-homoserine-lactone synthase (216 aa).

Belongs to the autoinducer synthase family.

The catalysed reaction is a fatty acyl-[ACP] + S-adenosyl-L-methionine = an N-acyl-L-homoserine lactone + S-methyl-5'-thioadenosine + holo-[ACP] + H(+). In terms of biological role, required for the synthesis of an acyl-HSL autoinducer that binds to YukR and which is involved in the regulation of motility and morphology. This Yersinia ruckeri protein is Acyl-homoserine-lactone synthase (yukI).